The following is a 446-amino-acid chain: Phosphoglucosamine mutase (446 aa).

Ser99 acts as the Phosphoserine intermediate in catalysis. Ser99, Asp242, Asp244, and Asp246 together coordinate Mg(2+). Ser99 bears the Phosphoserine mark.

It belongs to the phosphohexose mutase family. The cofactor is Mg(2+). In terms of processing, activated by phosphorylation.

The catalysed reaction is alpha-D-glucosamine 1-phosphate = D-glucosamine 6-phosphate. Functionally, catalyzes the conversion of glucosamine-6-phosphate to glucosamine-1-phosphate. This Campylobacter concisus (strain 13826) protein is Phosphoglucosamine mutase.